The chain runs to 310 residues: uncharacterized protein (310 aa).

Belongs to the YiaX1 family.

This is an uncharacterized protein from Salmonella typhimurium (strain LT2 / SGSC1412 / ATCC 700720).